The primary structure comprises 143 residues: Small ribosomal subunit protein uS12 (143 aa).

Residue proline 62 is modified to Hydroxyproline.

The protein belongs to the universal ribosomal protein uS12 family. Component of the 40S small ribosomal subunit.

The protein localises to the cytoplasm. The protein resides in the cytosol. It is found in the rough endoplasmic reticulum. In Ciona intestinalis (Transparent sea squirt), this protein is Small ribosomal subunit protein uS12 (RPS23).